We begin with the raw amino-acid sequence, 135 residues long: ATP synthase epsilon chain (135 aa).

Belongs to the ATPase epsilon chain family. F-type ATPases have 2 components, CF(1) - the catalytic core - and CF(0) - the membrane proton channel. CF(1) has five subunits: alpha(3), beta(3), gamma(1), delta(1), epsilon(1). CF(0) has three main subunits: a, b and c.

Its subcellular location is the cell inner membrane. In terms of biological role, produces ATP from ADP in the presence of a proton gradient across the membrane. In Rhodopseudomonas palustris (strain BisB5), this protein is ATP synthase epsilon chain.